A 457-amino-acid chain; its full sequence is Solute carrier family 38 member 6 (457 aa).

N-acetylmethionine is present on methionine 1. A phosphoserine mark is found at serine 4 and serine 7. 5 consecutive transmembrane segments (helical) span residues 48 to 68 (FGLS…LGLA), 70 to 90 (VMAN…ALLA), 112 to 132 (LGLF…IIIQ), 171 to 191 (LLII…KIGF), and 192 to 212 (LGYT…VVVI). Cysteine 219 and cysteine 239 are disulfide-bonded. 6 consecutive transmembrane segments (helical) span residues 251-271 (VYAI…LPIY), 289-309 (AIAL…LTFY), 328-348 (VIVM…APLI), 372-392 (SLTT…VPDI), 395-415 (VFGV…PGLF), and 432-452 (ALFL…LIIF).

It belongs to the amino acid/polyamine transporter 2 family. In terms of tissue distribution, expressed exclusively in neurons and not in astrocytes and glia cells. Highly expressed in the synapse. Highly expressed in glutamatergic neurons. Primarily expressed in excitatory neurons, with some minor expression in inhibitory neurons.

It localises to the cell membrane. Its subcellular location is the synapse. The enzyme catalyses L-glutamine(out) = L-glutamine(in). It catalyses the reaction L-glutamate(out) = L-glutamate(in). Functionally, amino acid transporter with an apparent selectivity for L-glutamine and L-glutamate. May facilitate glutamine uptake in excitatory neurons. The transport mechanism remains to be elucidated. This chain is Solute carrier family 38 member 6, found in Mus musculus (Mouse).